The following is a 378-amino-acid chain: Ribosomal RNA large subunit methyltransferase G (378 aa).

Belongs to the methyltransferase superfamily. RlmG family.

It is found in the cytoplasm. The catalysed reaction is guanosine(1835) in 23S rRNA + S-adenosyl-L-methionine = N(2)-methylguanosine(1835) in 23S rRNA + S-adenosyl-L-homocysteine + H(+). Its function is as follows. Specifically methylates the guanine in position 1835 (m2G1835) of 23S rRNA. The polypeptide is Ribosomal RNA large subunit methyltransferase G (Shewanella sp. (strain W3-18-1)).